A 518-amino-acid chain; its full sequence is Protein nucleotidyltransferase YdiU (518 aa).

8 residues coordinate ATP: Gly-100, Gly-102, Arg-103, Lys-123, Asp-135, Gly-136, Arg-193, and Arg-200. The Proton acceptor role is filled by Asp-270. 2 residues coordinate Mg(2+): Asn-271 and Asp-280. An ATP-binding site is contributed by Asp-280.

The protein belongs to the SELO family. Mg(2+) serves as cofactor. Mn(2+) is required as a cofactor.

The enzyme catalyses L-seryl-[protein] + ATP = 3-O-(5'-adenylyl)-L-seryl-[protein] + diphosphate. It carries out the reaction L-threonyl-[protein] + ATP = 3-O-(5'-adenylyl)-L-threonyl-[protein] + diphosphate. It catalyses the reaction L-tyrosyl-[protein] + ATP = O-(5'-adenylyl)-L-tyrosyl-[protein] + diphosphate. The catalysed reaction is L-histidyl-[protein] + UTP = N(tele)-(5'-uridylyl)-L-histidyl-[protein] + diphosphate. The enzyme catalyses L-seryl-[protein] + UTP = O-(5'-uridylyl)-L-seryl-[protein] + diphosphate. It carries out the reaction L-tyrosyl-[protein] + UTP = O-(5'-uridylyl)-L-tyrosyl-[protein] + diphosphate. Its function is as follows. Nucleotidyltransferase involved in the post-translational modification of proteins. It can catalyze the addition of adenosine monophosphate (AMP) or uridine monophosphate (UMP) to a protein, resulting in modifications known as AMPylation and UMPylation. This chain is Protein nucleotidyltransferase YdiU, found in Xanthomonas oryzae pv. oryzae (strain PXO99A).